The sequence spans 920 residues: Rho guanine nucleotide exchange factor 1 (920 aa).

In terms of domain architecture, RGSL spans 39–230 (DQNSQFQSLE…SLYMRHLGVR (192 aa)). The disordered stretch occupies residues 231-404 (TKSGDKKSGR…PGWRELVPPD (174 aa)). Residues 281–311 (DCRHLKVEADAEKPGPADRKGGLGMSSRDRT) show a composition bias toward basic and acidic residues. A compositionally biased stretch (acidic residues) spans 364-380 (STEDNGETESPEPGDDG). Residues Ser373, Gly386, Glu390, Ser408, and Ser412 each carry the phosphoserine modification. Residues 415–604 (KRQEVISELL…REILHHVNQA (190 aa)) enclose the DH domain. Phosphothreonine occurs at positions 432 and 694. The PH domain maps to 646 to 759 (KLVHEGPLTW…WCNLITETAG (114 aa)). The residue at position 737 (Tyr737) is a Phosphotyrosine; by JAK2. Disordered stretches follow at residues 764 to 797 (PAPA…AEMA) and 840 to 864 (TEED…PGPV). Positions 865 to 894 (HTQEIEENLLSLEVAIRQLEELEEEFCRLR) form a coiled coil. Position 905 is a phosphoserine (Ser905).

In terms of assembly, interacts with RHOA, GNA12 and GNA13. Homooligomerizes through the coiled coil region. Interacts with CTNNAL1. May interact with CCPG1. Phosphorylated by PKCA. Angiotensin-2 induced Tyr-737 phosphorylation is mediated by JAK2. Isoform 5 is phosphorylated at 'Ser-390'. In terms of tissue distribution, ubiquitously expressed.

The protein localises to the cytoplasm. Its subcellular location is the membrane. Seems to play a role in the regulation of RhoA GTPase by guanine nucleotide-binding alpha-12 (GNA12) and alpha-13 (GNA13) subunits. Acts as a GTPase-activating protein (GAP) for GNA12 and GNA13, and as guanine nucleotide exchange factor (GEF) for RhoA GTPase. Activated G alpha 13/GNA13 stimulates the RhoGEF activity through interaction with the RGS-like domain. This GEF activity is inhibited by binding to activated GNA12. Mediates angiotensin-2-induced RhoA activation. Isoform 3 and isoform 4 do not homooligomerize and show an enhanced RhoGEF activity. In lymphoid follicles, may trigger activation of GNA13 as part of S1PR2-dependent signaling pathway that leads to inhibition of germinal center (GC) B cell growth and migration outside the GC niche. In Mus musculus (Mouse), this protein is Rho guanine nucleotide exchange factor 1 (Arhgef1).